The sequence spans 58 residues: UPF0391 membrane protein Patl_4137 (58 aa).

2 helical membrane-spanning segments follow: residues 4–24 and 27–47; these read WALTFLIIAILAGVMGFGGIA and AAGIAKIIFFVFLVLLVLSLV.

This sequence belongs to the UPF0391 family.

The protein resides in the cell membrane. The protein is UPF0391 membrane protein Patl_4137 of Pseudoalteromonas atlantica (strain T6c / ATCC BAA-1087).